Here is a 287-residue protein sequence, read N- to C-terminus: MSPAFDIAPLDATFGAVVTGVKLADLDDAGWLDLQAAWLEYALLVFPDQHLTREQQIAFARRFGPLEFEMAAISNVRPDGSLRVESDNDDMMKILKGNMGWHADSTYMPVQAKGAVFSAEVVPSVGGQTGFADMRAAYDALDEDLKARVETLQARHSLHYSQSKLGHQTKAADGEYSGYGLHDGPVPLRPLVKIHPETGRKSLLIGRHAHAIPGLEPAESERLLQQLIDFACQPPRIYHHDWAPGDAVLWDNRCLLHQATPWDMTQKRIMWHSRIAGDPASETALAH.

Positions 102 and 104 each coordinate Fe cation. 2-oxoglutarate is bound by residues T129 and W242. H257 is a binding site for Fe cation. Position 268 (R268) interacts with 2-oxoglutarate.

This sequence belongs to the TfdA dioxygenase family. In terms of assembly, monomer. Fe cation serves as cofactor. L-ascorbate is required as a cofactor.

The catalysed reaction is (S)-2-(4-chloro-2-methylphenoxy)propanoate + 2-oxoglutarate + O2 = 2-methyl-4-chlorophenol + pyruvate + succinate + CO2. It catalyses the reaction (S)-(2,4-dichlorophenoxy)propanoate + 2-oxoglutarate + O2 = 2,4-dichlorophenol + pyruvate + succinate + CO2. The protein operates within xenobiotic degradation; 2-(2,4-dichlorophenoxy)propanoate degradation. Functionally, involved in the degradation of the phenoxypropionate herbicides. Catalyzes the enantiospecific cleavage of the ether bond in the herbicid S-dichlorprop ((S)-2-(2,4-dichlorophenoxy)propionate)(S-2,4-DP) and S-mecoprop ((S)-2-(4-chloro-2-methylphenoxy)propionate)(S-2,4-MCPP). It can also accept (RS)-2-(4-chloro-2-methylphenoxy)propionate ((RS)-2,4-MCPP) and phenoxyacetate derivatives such as 2,4-dichlorophenoxyacetate (2,4-D), however it can only accept 2-oxoglutarate as oxygen acceptor. The polypeptide is (S)-phenoxypropionate/alpha-ketoglutarate-dioxygenase (Sphingobium herbicidovorans (strain ATCC 700291 / DSM 11019 / CCUG 56400 / KCTC 2939 / LMG 18315 / NBRC 16415 / MH) (Sphingomonas herbicidovorans)).